The chain runs to 514 residues: 2-isopropylmalate synthase (514 aa).

Residues 5–267 enclose the Pyruvate carboxyltransferase domain; the sequence is VIIFDTTLRD…ETNIKHEEIH (263 aa). Positions 14, 202, 204, and 238 each coordinate Mn(2+). The tract at residues 392–514 is regulatory domain; that stretch reads KLNYLSVQSG…AEIKERIATV (123 aa).

It belongs to the alpha-IPM synthase/homocitrate synthase family. LeuA type 1 subfamily. As to quaternary structure, homodimer. Requires Mn(2+) as cofactor.

The protein localises to the cytoplasm. It catalyses the reaction 3-methyl-2-oxobutanoate + acetyl-CoA + H2O = (2S)-2-isopropylmalate + CoA + H(+). It functions in the pathway amino-acid biosynthesis; L-leucine biosynthesis; L-leucine from 3-methyl-2-oxobutanoate: step 1/4. Catalyzes the condensation of the acetyl group of acetyl-CoA with 3-methyl-2-oxobutanoate (2-ketoisovalerate) to form 3-carboxy-3-hydroxy-4-methylpentanoate (2-isopropylmalate). The chain is 2-isopropylmalate synthase from Photobacterium profundum (strain SS9).